The primary structure comprises 154 residues: Protein-export protein SecB (154 aa).

Belongs to the SecB family. As to quaternary structure, homotetramer, a dimer of dimers. One homotetramer interacts with 1 SecA dimer.

The protein localises to the cytoplasm. Its function is as follows. One of the proteins required for the normal export of preproteins out of the cell cytoplasm. It is a molecular chaperone that binds to a subset of precursor proteins, maintaining them in a translocation-competent state. It also specifically binds to its receptor SecA. The protein is Protein-export protein SecB of Buchnera aphidicola subsp. Schizaphis graminum (strain Sg).